A 297-amino-acid polypeptide reads, in one-letter code: Acetyl-coenzyme A carboxylase carboxyl transferase subunit beta (297 aa).

A CoA carboxyltransferase N-terminal domain is found at 27 to 296 (LWHKCPSCEA…PEAAKEVAAV (270 aa)). Cys31, Cys34, Cys50, and Cys53 together coordinate Zn(2+). A C4-type zinc finger spans residues 31 to 53 (CPSCEAVLYRPELEKTLDVCPKC).

It belongs to the AccD/PCCB family. In terms of assembly, acetyl-CoA carboxylase is a heterohexamer composed of biotin carboxyl carrier protein (AccB), biotin carboxylase (AccC) and two subunits each of ACCase subunit alpha (AccA) and ACCase subunit beta (AccD). Requires Zn(2+) as cofactor.

It is found in the cytoplasm. The catalysed reaction is N(6)-carboxybiotinyl-L-lysyl-[protein] + acetyl-CoA = N(6)-biotinyl-L-lysyl-[protein] + malonyl-CoA. It participates in lipid metabolism; malonyl-CoA biosynthesis; malonyl-CoA from acetyl-CoA: step 1/1. Functionally, component of the acetyl coenzyme A carboxylase (ACC) complex. Biotin carboxylase (BC) catalyzes the carboxylation of biotin on its carrier protein (BCCP) and then the CO(2) group is transferred by the transcarboxylase to acetyl-CoA to form malonyl-CoA. The sequence is that of Acetyl-coenzyme A carboxylase carboxyl transferase subunit beta from Pseudomonas entomophila (strain L48).